The sequence spans 118 residues: Cell division protein FtsB (118 aa).

Residues 1-6 are Cytoplasmic-facing; sequence MRNWRW. The chain crosses the membrane as a helical span at residues 7–24; that stretch reads LLLVLAALLSWLQHRFWF. Topologically, residues 25 to 118 are periplasmic; it reads GPGNSGEVRM…DLAQPRREKR (94 aa). A coiled-coil region spans residues 30–66; sequence GEVRMLQVQIVQQHQENERLRQRNASLAAEVKNLKDG. The disordered stretch occupies residues 97 to 118; the sequence is PLPNDTSADHGVDLAQPRREKR. The segment covering 103-118 has biased composition (basic and acidic residues); sequence SADHGVDLAQPRREKR.

This sequence belongs to the FtsB family. In terms of assembly, part of a complex composed of FtsB, FtsL and FtsQ.

It is found in the cell inner membrane. Functionally, essential cell division protein. May link together the upstream cell division proteins, which are predominantly cytoplasmic, with the downstream cell division proteins, which are predominantly periplasmic. This Xylella fastidiosa (strain 9a5c) protein is Cell division protein FtsB.